A 144-amino-acid chain; its full sequence is 3-dehydroquinate dehydratase (144 aa).

Tyr-22 (proton acceptor) is an active-site residue. Residues Asn-73, His-79, and Asp-86 each coordinate substrate. His-99 acts as the Proton donor in catalysis. Substrate contacts are provided by residues 100–101 (LS) and Arg-110.

It belongs to the type-II 3-dehydroquinase family. As to quaternary structure, homododecamer.

It catalyses the reaction 3-dehydroquinate = 3-dehydroshikimate + H2O. It participates in metabolic intermediate biosynthesis; chorismate biosynthesis; chorismate from D-erythrose 4-phosphate and phosphoenolpyruvate: step 3/7. Functionally, catalyzes a trans-dehydration via an enolate intermediate. The polypeptide is 3-dehydroquinate dehydratase (Geotalea daltonii (strain DSM 22248 / JCM 15807 / FRC-32) (Geobacter daltonii)).